The chain runs to 322 residues: Mitochondrial thiamine pyrophosphate carrier 1 (322 aa).

Solcar repeat units lie at residues 12–111 (GSKT…VTLG), 122–208 (PAAA…LRLP), and 215–310 (PFGS…VLGI). 6 helical membrane-spanning segments follow: residues 18–38 (MIAGATAGLIARFVIAPLDVV), 92–108 (LMYVSYSAIQFTTYRSV), 128–148 (FIAGASAGAVATTATYPLDLL), 180–200 (FFQGLGAGVGQIVPYMGIFFA), 221–241 (ASAGVIASVIAKTGIFPFDLI), and 285–302 (GLTVSLFKSAPASAVTMW).

The protein belongs to the mitochondrial carrier (TC 2.A.29) family.

The protein resides in the mitochondrion inner membrane. In terms of biological role, mitochondrial transporter that mediates uptake of thiamine pyrophosphate (ThPP) into mitochondria. This chain is Mitochondrial thiamine pyrophosphate carrier 1 (tpc1), found in Botryotinia fuckeliana (strain B05.10) (Noble rot fungus).